The following is a 650-amino-acid chain: Methionine--tRNA ligase (650 aa).

Positions 11 to 21 match the 'HIGH' region motif; that stretch reads YYVNDIPHIGH. Cys126, Cys129, Cys147, and Cys150 together coordinate Zn(2+). The short motif at 301 to 305 is the 'KMSKS' region element; it reads KMSKS. Lys304 is an ATP binding site. Residues 513–535 form a disordered region; it reads EKTEKAGEASPEKNEKEKKDAKE. In terms of domain architecture, tRNA-binding spans 549-650; it reads DFKKVEIKVG…REKIAGSLIS (102 aa).

The protein belongs to the class-I aminoacyl-tRNA synthetase family. MetG type 2A subfamily. Homodimer. The cofactor is Zn(2+).

It is found in the cytoplasm. It carries out the reaction tRNA(Met) + L-methionine + ATP = L-methionyl-tRNA(Met) + AMP + diphosphate. Is required not only for elongation of protein synthesis but also for the initiation of all mRNA translation through initiator tRNA(fMet) aminoacylation. The sequence is that of Methionine--tRNA ligase (metG) from Helicobacter pylori (strain ATCC 700392 / 26695) (Campylobacter pylori).